The chain runs to 257 residues: Ciliary microtubule associated protein 1B (257 aa).

STPGR repeat units follow at residues 103-129, 182-207, and 218-243; these read PGPG…LSAR, PGPG…MTGR, and PGPG…FGIR.

The protein belongs to the CIMAP family.

It is found in the cell projection. It localises to the cilium. The protein localises to the flagellum. The protein is Ciliary microtubule associated protein 1B (cimap1b) of Danio rerio (Zebrafish).